A 37-amino-acid chain; its full sequence is Large ribosomal subunit protein bL36 (37 aa).

Belongs to the bacterial ribosomal protein bL36 family.

In Streptomyces griseus subsp. griseus (strain JCM 4626 / CBS 651.72 / NBRC 13350 / KCC S-0626 / ISP 5235), this protein is Large ribosomal subunit protein bL36.